Consider the following 349-residue polypeptide: tRNA pseudouridine synthase D (349 aa).

Phe-27 serves as a coordination point for substrate. Catalysis depends on Asp-80, which acts as the Nucleophile. A substrate-binding site is contributed by Asn-129. The 149-residue stretch at 155–303 (GVPNYFGAQR…VEAARRAMLL (149 aa)) folds into the TRUD domain. Phe-329 is a substrate binding site.

This sequence belongs to the pseudouridine synthase TruD family.

It catalyses the reaction uridine(13) in tRNA = pseudouridine(13) in tRNA. In terms of biological role, responsible for synthesis of pseudouridine from uracil-13 in transfer RNAs. The protein is tRNA pseudouridine synthase D of Enterobacter sp. (strain 638).